Consider the following 331-residue polypeptide: Centriolar satellite-associated tubulin polyglutamylase complex regulator 1 (331 aa).

Positions 283–331 (PTSNNNSSSSALGQKEMSKKASPRKSLHQRKRIEMESDGSTEETDSSEN) are disordered. A compositionally biased stretch (basic residues) spans 303-313 (ASPRKSLHQRK). Residues 318-331 (ESDGSTEETDSSEN) show a composition bias toward acidic residues.

Belongs to the CSTPP1 family. As to quaternary structure, interacts with PCM1. Interacts with the complex TPGC. Binds to alpha-tubulin. Expression in elevated in ciliated tissues/organs, including brain, spinal cord, kidney, eyes, ears and lateral line.

It is found in the cytoplasm. The protein resides in the cytoskeleton. It localises to the microtubule organizing center. The protein localises to the centrosome. Its subcellular location is the centriolar satellite. Regulator of the tubulin polyglutamylase complex (TPGC) that controls cytoskeletal organization, nuclear shape, and cilium disassembly by balancing microtubule and actin assembly. Regulates the assembly and stability of the TPGC and thereby modulates polyglutamylation of the microtubule, which antagonizes MAP4 binding. This chain is Centriolar satellite-associated tubulin polyglutamylase complex regulator 1 (cstpp1), found in Danio rerio (Zebrafish).